The primary structure comprises 125 residues: uncharacterized protein (125 aa).

The first 21 residues, Met1–Ala21, serve as a signal peptide directing secretion. The stretch at Lys54 to Ser102 forms a coiled coil. Residues Tyr96–Lys125 are disordered. Over residues Glu108–Lys125 the composition is skewed to basic and acidic residues.

This is an uncharacterized protein from Rickettsia bellii (strain RML369-C).